The following is a 60-amino-acid chain: Mastoparan-VT4 (60 aa).

The N-terminal stretch at 1 to 27 (MKNPILILFTAFIALLGFFGMSAEALA) is a signal peptide. AXPX repeat units lie at residues 27 to 30 (ADPK), 31 to 34 (ADPL), 35 to 38 (AGPN), and 41 to 44 (ADPE). The propeptide occupies 28–45 (DPKADPLAGPNPDADPEA). A Leucine amide modification is found at Leu59.

This sequence belongs to the MCD family. Mastoparan subfamily. Expressed by the venom gland.

The protein localises to the secreted. Its function is as follows. The synthetic peptide shows antimicrobial activities against Gram-negative bacteria (but not against all strains tested), Gram-positive bacteria (not all strains tested) and the fungi C.albicans and C.parapsilosis. Exhibits little hemolytic activity against washed human erythrocytes. The sequence is that of Mastoparan-VT4 from Vespa tropica (Greater banded hornet).